The following is a 324-amino-acid chain: HTH-type transcriptional regulator GlxA (324 aa).

The HTH araC/xylS-type domain occupies 223–321 (LAVLEKMETA…SQTPGSLRRR (99 aa)). DNA-binding regions (H-T-H motif) lie at residues 240–261 (TAMARLAGVSPRHLDRLFREHR) and 288–311 (IPEIAYATGFSSPAHFSNAFKRLF).

This is HTH-type transcriptional regulator GlxA (glxA) from Rhizobium meliloti (strain 1021) (Ensifer meliloti).